A 2222-amino-acid polypeptide reads, in one-letter code: Protein SWEETIE (2222 aa).

HEAT repeat units lie at residues 37 to 75, 228 to 265, 331 to 368, 510 to 540, 541 to 578, 611 to 648, 768 to 807, 898 to 936, 968 to 1008, and 1029 to 1066; these read LLCF…LVTL, SEFD…LGMH, SELQ…GVID, PARL…SEKE, AGWL…GNPE, CNDG…LVDI, QGML…GLKA, MALS…TIEA, QGIG…WQEI, and VSVH…KDPV. Positions 1133–1165 are disordered; that stretch reads IAENDPAYTRENLGDDDEDMVSSSSGKSIRANP. 10 HEAT repeats span residues 1238–1269, 1270–1306, 1312–1354, 1372–1410, 1434–1474, 1550–1586, 1783–1820, 1836–1874, 1880–1917, and 1966–2006; these read MRPI…LLEQ, YQAQ…TSGI, VAVK…AHAS, VEFE…NLKK, EAWP…LEAE, DLCQ…NCPK, VMLK…RYNN, GDIV…HSIT, GFMS…LVSH, and AMDI…QVST. Residues 1992 to 2203 are disordered; the sequence is EALSTMPTSF…DESSKEHVGA (212 aa). The segment covering 1996–2009 has biased composition (polar residues); it reads TMPTSFNQVSTVES. Residues 2010-2027 are compositionally biased toward acidic residues; sequence GTDEEEEEEEDDDDDDWD. Polar residues predominate over residues 2028–2040; that stretch reads TFQSFPASTNLEG. A compositionally biased stretch (acidic residues) spans 2062 to 2072; that stretch reads QDDESNAEETD. 2 stretches are compositionally biased toward basic and acidic residues: residues 2073–2096 and 2108–2124; these read DQHL…SKEV and TRED…EETV. Residues 2150 to 2164 show a composition bias toward polar residues; that stretch reads NEQSVESKNLESENI. The segment covering 2191-2202 has biased composition (basic and acidic residues); sequence SPEDESSKEHVG.

This sequence belongs to the HEATR5 family.

Functionally, may regulate multiple metabolic, hormonal and stress-related pathways. Required for carbohydrate metabolism and homoeostasis. May also monitor ethylene biosynthesis and senescence. The chain is Protein SWEETIE from Arabidopsis thaliana (Mouse-ear cress).